The primary structure comprises 130 residues: MAKRKVTKKKKIKKQVGRGVVYISATFNNTMITVTDEMGNALCWSSAGALGFKGSKKSTPFAAQQAVEDVMAKAKEYGIKEVGIKVQGPGGGRETAVKTVGAIEGIKVLWMKDVTPLPHNGCRPRKRRRV.

The protein belongs to the universal ribosomal protein uS11 family. Part of the 30S ribosomal subunit. Interacts with proteins S7 and S18. Binds to IF-3.

Located on the platform of the 30S subunit, it bridges several disparate RNA helices of the 16S rRNA. Forms part of the Shine-Dalgarno cleft in the 70S ribosome. This Nautilia profundicola (strain ATCC BAA-1463 / DSM 18972 / AmH) protein is Small ribosomal subunit protein uS11.